A 361-amino-acid polypeptide reads, in one-letter code: MAALSLKGVRKSYDGKQHVLHGIDVEIADGEFIVLVGPSGCGKSTLLRMIAGLETVTDGEIAIGERVVNTLEPKDRDIAMVFQNYALYPHMTVAQNMGYGLKIRGIERTTIDSRVAAAAKILELEPLLARRPRELSGGQRQRVAMGRAIVREPSVFLFDEPLSNLDAKLRVQMRLEIQRLHARLATTSVYVTHDQIEAMTLAQRVIVMNRGYAEQIGAPVDVYEKPATVFVAGFIGSPAMNLMHGRLSDDGATFTVAGGGPALPVAGAPGIGAAIATGRDWVLGVRPEHMTPQPGVAQATLPVDSCELLGADNLAHGRWGNHDVAVRLPHADRPARGTALAAALPAHRLHFFDPETGKRAG.

The region spanning 4-235 is the ABC transporter domain; it reads LSLKGVRKSY…PATVFVAGFI (232 aa). Residue 37 to 44 coordinates ATP; sequence GPSGCGKS.

It belongs to the ABC transporter superfamily. sn-glycerol-3-phosphate importer (TC 3.A.1.1.3) family. The complex is composed of two ATP-binding proteins (UgpC), two transmembrane proteins (UgpA and UgpE) and a solute-binding protein (UgpB).

Its subcellular location is the cell inner membrane. The enzyme catalyses sn-glycerol 3-phosphate(out) + ATP + H2O = sn-glycerol 3-phosphate(in) + ADP + phosphate + H(+). Its function is as follows. Part of the ABC transporter complex UgpBAEC involved in sn-glycerol-3-phosphate (G3P) import. Responsible for energy coupling to the transport system. This Burkholderia lata (strain ATCC 17760 / DSM 23089 / LMG 22485 / NCIMB 9086 / R18194 / 383) protein is sn-glycerol-3-phosphate import ATP-binding protein UgpC.